The chain runs to 185 residues: CASP-like protein 2C2 (185 aa).

Over 1 to 22 the chain is Cytoplasmic; that stretch reads MAAAARVSEVKAEGLLRGACTA. The chain crosses the membrane as a helical span at residues 23-43; it reads LAAAAALLVGLSTQTETVLLV. The Extracellular portion of the chain corresponds to 44–53; that stretch reads RKKATVKDVQ. The chain crosses the membrane as a helical span at residues 54–74; the sequence is ALWVLAMAAAAAAGYHLLQLL. At 75 to 104 the chain is on the cytoplasmic side; the sequence is KCLYLGRVGGARPCRRSSRALAWTCLLLDK. Residues 105 to 125 form a helical membrane-spanning segment; sequence ACAYTTFATTVAAAQACVVAL. Topologically, residues 126–146 are extracellular; sequence DGAHALQWTKLCNIYTRFCEQ. The helical transmembrane segment at 147-167 threads the bilayer; sequence VAGSLVLGMLAAVGTAVLSAA. The Cytoplasmic segment spans residues 168–185; it reads SARNVFRHYASLETYAAH.

This sequence belongs to the Casparian strip membrane proteins (CASP) family. Homodimer and heterodimers.

It localises to the cell membrane. The polypeptide is CASP-like protein 2C2 (Zea mays (Maize)).